A 423-amino-acid chain; its full sequence is Histone acetyltransferase type B subunit 2 (423 aa).

WD repeat units follow at residues P138–E174, S175–S224, S228–K268, P271–H311, and G315–S355. An interaction with the histone H4 N-terminus region spans residues D357 to D361. One copy of the WD 6 repeat lies at G372–S412.

Belongs to the WD repeat RBAP46/RBAP48/MSI1 family. In terms of assembly, component of the HAT-B complex composed of at least HAT1 and HAT2. The HAT-B complex binds to histone H4 tail.

It localises to the cytoplasm. The protein localises to the nucleus. Regulatory subunit of the histone acetylase B (HAT-B) complex. The complex acetylates 'Lys-12' of histone H4 which is required for telomeric silencing. The protein is Histone acetyltransferase type B subunit 2 (HAT2) of Eremothecium gossypii (strain ATCC 10895 / CBS 109.51 / FGSC 9923 / NRRL Y-1056) (Yeast).